We begin with the raw amino-acid sequence, 182 residues long: ATP synthase subunit delta (182 aa).

The protein belongs to the ATPase delta chain family. F-type ATPases have 2 components, F(1) - the catalytic core - and F(0) - the membrane proton channel. F(1) has five subunits: alpha(3), beta(3), gamma(1), delta(1), epsilon(1). F(0) has three main subunits: a(1), b(2) and c(10-14). The alpha and beta chains form an alternating ring which encloses part of the gamma chain. F(1) is attached to F(0) by a central stalk formed by the gamma and epsilon chains, while a peripheral stalk is formed by the delta and b chains.

The protein localises to the cell inner membrane. Its function is as follows. F(1)F(0) ATP synthase produces ATP from ADP in the presence of a proton or sodium gradient. F-type ATPases consist of two structural domains, F(1) containing the extramembraneous catalytic core and F(0) containing the membrane proton channel, linked together by a central stalk and a peripheral stalk. During catalysis, ATP synthesis in the catalytic domain of F(1) is coupled via a rotary mechanism of the central stalk subunits to proton translocation. In terms of biological role, this protein is part of the stalk that links CF(0) to CF(1). It either transmits conformational changes from CF(0) to CF(1) or is implicated in proton conduction. The protein is ATP synthase subunit delta of Cytophaga hutchinsonii (strain ATCC 33406 / DSM 1761 / CIP 103989 / NBRC 15051 / NCIMB 9469 / D465).